Reading from the N-terminus, the 92-residue chain is UPF0235 protein PF1765 (92 aa).

The protein belongs to the UPF0235 family.

In Pyrococcus furiosus (strain ATCC 43587 / DSM 3638 / JCM 8422 / Vc1), this protein is UPF0235 protein PF1765.